The sequence spans 1049 residues: FERM, ARHGEF and pleckstrin domain-containing protein 1 (1049 aa).

The tract at residues Met-1 to Gly-37 is disordered. Phosphoserine is present on residues Ser-20 and Ser-23. Thr-24 carries the phosphothreonine modification. Residues Met-40–Glu-320 enclose the FERM domain. Phosphoserine occurs at positions 340, 373, 389, 403, 427, 433, and 437. A disordered region spans residues Phe-361–Lys-537. Polar residues-rich tracts occupy residues Thr-371–Leu-395 and Glu-402–Ala-412. Low complexity predominate over residues Ser-435–Pro-448. Polar residues-rich tracts occupy residues Ser-473–Gly-492 and Val-499–Pro-514. Residues Ser-513 and Ser-517 each carry the phosphoserine modification. Residues Lys-543–Thr-734 form the DH domain. Residues Glu-763–Asp-860 form the PH 1 domain. Residues Ser-837, Ser-876, and Ser-882 each carry the phosphoserine modification. A disordered region spans residues Asn-866–Ala-908. Thr-887 is modified (phosphothreonine). Ser-893, Ser-900, and Ser-903 each carry phosphoserine. The 98-residue stretch at Glu-936–Ser-1033 folds into the PH 2 domain.

In terms of assembly, interacts with CADM1. Interacts with RAC1. As to expression, detected in forbrain (at protein level).

It localises to the cell membrane. The protein localises to the synapse. It is found in the synaptosome. Its subcellular location is the cytoplasm. The protein resides in the cytosol. It localises to the cell projection. The protein localises to the filopodium. It is found in the dendrite. Its subcellular location is the dendritic spine. In terms of biological role, may play a role in semaphorin signaling. Functions as a guanine nucleotide exchange factor for RAC1. Plays a role in the assembly and disassembly of dendritic filopodia, the formation of dendritic spines, regulation of dendrite length and ultimately the formation of synapses. This chain is FERM, ARHGEF and pleckstrin domain-containing protein 1 (Farp1), found in Rattus norvegicus (Rat).